The following is a 155-amino-acid chain: Small ribosomal subunit protein uS7 (155 aa).

The protein belongs to the universal ribosomal protein uS7 family. As to quaternary structure, part of the 30S ribosomal subunit. Contacts proteins S9 and S11.

Its function is as follows. One of the primary rRNA binding proteins, it binds directly to 16S rRNA where it nucleates assembly of the head domain of the 30S subunit. Is located at the subunit interface close to the decoding center, probably blocks exit of the E-site tRNA. The polypeptide is Small ribosomal subunit protein uS7 (Xylella fastidiosa (strain M23)).